We begin with the raw amino-acid sequence, 448 residues long: Bifunctional F420 biosynthesis protein FbiB (448 aa).

Positions 1-244 (MTGPEHGSAS…PGANDLFWLG (244 aa)) are coenzyme F420:L-glutamate ligase. GTP-binding positions include 20–23 (LPEF), S50, and K55. D109 is an a divalent metal cation binding site. N112 contributes to the GTP binding site. D150 and T151 together coordinate a divalent metal cation. Residues 245 to 448 (TAEALELGRQ…VPAADLLILK (204 aa)) are dehydro-coenzyme F420-0 reductase. Residues 260–264 (RRSVR) and A288 contribute to the FMN site. Residue D320 participates in coenzyme F420-(gamma-Glu)n binding. The FMN site is built by G399 and R436.

In the N-terminal section; belongs to the CofE family. Mg(2+) serves as cofactor. It depends on Mn(2+) as a cofactor. The cofactor is K(+).

The enzyme catalyses oxidized coenzyme F420-0 + GTP + L-glutamate = oxidized coenzyme F420-1 + GDP + phosphate + H(+). It catalyses the reaction oxidized coenzyme F420-1 + GTP + L-glutamate = oxidized coenzyme F420-2 + GDP + phosphate + H(+). It carries out the reaction oxidized coenzyme F420-(gamma-L-Glu)(n) + GTP + L-glutamate = oxidized coenzyme F420-(gamma-L-Glu)(n+1) + GDP + phosphate + H(+). The catalysed reaction is oxidized coenzyme F420-0 + FMN + H(+) = dehydro coenzyme F420-0 + FMNH2. The protein operates within cofactor biosynthesis; coenzyme F420 biosynthesis. In terms of biological role, bifunctional enzyme that catalyzes the GTP-dependent successive addition of multiple gamma-linked L-glutamates to the L-lactyl phosphodiester of 7,8-didemethyl-8-hydroxy-5-deazariboflavin (F420-0) to form polyglutamated F420 derivatives, and the FMNH2-dependent reduction of dehydro-F420-0 to form F420-0. This chain is Bifunctional F420 biosynthesis protein FbiB, found in Mycobacterium tuberculosis (strain ATCC 25177 / H37Ra).